We begin with the raw amino-acid sequence, 36 residues long: Serine protease inhibitor 2 (36 aa).

Residues 1-36 (EISCEPGTTFQDKCNTCRCGKDGKSAAGCTLKACPQ) form the Pacifastin domain. Cystine bridges form between cysteine 4-cysteine 19, cysteine 14-cysteine 34, and cysteine 17-cysteine 29.

This sequence belongs to the protease inhibitor I19 family. In terms of tissue distribution, expressed in hemolymph.

Its subcellular location is the secreted. Its function is as follows. Probable serine protease inhibitor. This Melanoplus sanguinipes (Migratory grasshopper) protein is Serine protease inhibitor 2.